We begin with the raw amino-acid sequence, 276 residues long: Exosome complex component RRP43 (276 aa).

Ala-2 is subject to N-acetylalanine.

It belongs to the RNase PH family. Component of the RNA exosome core complex (Exo-9), composed of EXOSC1, EXOSC2, EXOSC3, EXOSC4, EXOSC5, EXOSC6, EXOSC7, EXOSC8 and EXOSC9; within the complex interacts with EXOSC5 and EXOSC6. The catalytically inactive RNA exosome core complex (Exo-9) associates with the catalytic subunit EXOSC10/RRP6. Exo-9 may associate with DIS3 to form the nucleolar exosome complex, or DIS3L to form the cytoplasmic exosome complex. Exo-9 is formed by a hexameric base ring consisting of the heterodimers EXOSC4-EXOSC9, EXOSC5-EXOSC8 and EXOSC6-EXOSC7, and a cap ring consisting of EXOSC1, EXOSC2 and EXOSC3. The RNA exosome complex associates with cofactors C1D/RRP47, MPHOSPH6/MPP6 and MTREX/MTR4. Binds outer membrane protein opap from Neisseria gonorrhoeae.

The protein resides in the cytoplasm. The protein localises to the nucleus. It localises to the nucleolus. Functionally, non-catalytic component of the RNA exosome complex which has 3'-&gt;5' exoribonuclease activity and participates in a multitude of cellular RNA processing and degradation events. In the nucleus, the RNA exosome complex is involved in proper maturation of stable RNA species such as rRNA, snRNA and snoRNA, in the elimination of RNA processing by-products and non-coding 'pervasive' transcripts, such as antisense RNA species and promoter-upstream transcripts (PROMPTs), and of mRNAs with processing defects, thereby limiting or excluding their export to the cytoplasm. The RNA exosome may be involved in Ig class switch recombination (CSR) and/or Ig variable region somatic hypermutation (SHM) by targeting AICDA deamination activity to transcribed dsDNA substrates. In the cytoplasm, the RNA exosome complex is involved in general mRNA turnover and specifically degrades inherently unstable mRNAs containing AU-rich elements (AREs) within their 3' untranslated regions, and in RNA surveillance pathways, preventing translation of aberrant mRNAs. It seems to be involved in degradation of histone mRNA. The catalytic inactive RNA exosome core complex of 9 subunits (Exo-9) is proposed to play a pivotal role in the binding and presentation of RNA for ribonucleolysis, and to serve as a scaffold for the association with catalytic subunits and accessory proteins or complexes. EXOSC8 binds to ARE-containing RNAs. This chain is Exosome complex component RRP43 (EXOSC8), found in Homo sapiens (Human).